The sequence spans 239 residues: Leucyl/phenylalanyl-tRNA--protein transferase (239 aa).

The protein belongs to the L/F-transferase family.

The protein resides in the cytoplasm. It carries out the reaction N-terminal L-lysyl-[protein] + L-leucyl-tRNA(Leu) = N-terminal L-leucyl-L-lysyl-[protein] + tRNA(Leu) + H(+). The catalysed reaction is N-terminal L-arginyl-[protein] + L-leucyl-tRNA(Leu) = N-terminal L-leucyl-L-arginyl-[protein] + tRNA(Leu) + H(+). The enzyme catalyses L-phenylalanyl-tRNA(Phe) + an N-terminal L-alpha-aminoacyl-[protein] = an N-terminal L-phenylalanyl-L-alpha-aminoacyl-[protein] + tRNA(Phe). Its function is as follows. Functions in the N-end rule pathway of protein degradation where it conjugates Leu, Phe and, less efficiently, Met from aminoacyl-tRNAs to the N-termini of proteins containing an N-terminal arginine or lysine. This chain is Leucyl/phenylalanyl-tRNA--protein transferase, found in Syntrophus aciditrophicus (strain SB).